Reading from the N-terminus, the 265-residue chain is Exosome complex component RRP42 (265 aa).

This sequence belongs to the RNase PH family. As to quaternary structure, component of the RNA exosome complex. Specifically part of the catalytically inactive RNA exosome core complex (Exo-9) which may associate with the catalytic subunits RRP6 and DIS3 in cytoplasmic- and nuclear-specific RNA exosome complex forms. Exo-9 is formed by a hexameric base ring of RNase PH domain-containing subunits and a cap ring consisting of CSL4, RRP4 and RRP40.

The protein resides in the cytoplasm. It localises to the nucleus. It is found in the nucleolus. Functionally, non-catalytic component of the RNA exosome complex which has 3'-&gt;5' exoribonuclease activity and participates in a multitude of cellular RNA processing and degradation events. In the nucleus, the RNA exosome complex is involved in proper maturation of stable RNA species such as rRNA, snRNA and snoRNA, in the elimination of RNA processing by-products and non-coding 'pervasive' transcripts, such as antisense RNA species and cryptic unstable transcripts (CUTs), and of mRNAs with processing defects, thereby limiting or excluding their export to the cytoplasm. In the cytoplasm, the RNA exosome complex is involved in general mRNA turnover and in RNA surveillance pathways, preventing translation of aberrant mRNAs. The catalytic inactive RNA exosome core complex of 9 subunits (Exo-9) is proposed to play a pivotal role in the binding and presentation of RNA for ribonucleolysis, and to serve as a scaffold for the association with catalytic subunits and accessory proteins or complexes. RRP42 is part of the hexameric ring of RNase PH domain-containing subunits proposed to form a central channel which threads RNA substrates for degradation. The sequence is that of Exosome complex component RRP42 (RRP42) from Saccharomyces cerevisiae (strain ATCC 204508 / S288c) (Baker's yeast).